A 528-amino-acid chain; its full sequence is Protein spinster homolog 1 (528 aa).

The tract at residues 1–44 (MSGSDTAPFLSQADDTDDGPAPGTPGLPGSMGNPKSEDPAVPDQ) is disordered. 12 consecutive transmembrane segments (helical) span residues 50–70 (ITGL…YINL), 98–118 (GLIQ…FGYL), 126–146 (YLMC…SFIP), 160–180 (VGVG…DLFV), 187–207 (MLSV…IAGS), 218–238 (WALR…FLVV), 278–298 (LGFT…PAFL), 323–343 (LIFG…GVEI), 357–377 (LVCA…LACA), 381–401 (IVAT…NWAI), 421–441 (FQIV…IGSI), and 465–485 (MLCA…AIFI). A Phosphoserine modification is found at S518.

Belongs to the major facilitator superfamily. Spinster (TC 2.A.1.49) family. Interacts with BCL2 and BCL2L1.

It localises to the lysosome membrane. The catalysed reaction is a 1-acyl-sn-glycero-3-phosphocholine(out) + H(+)(out) = a 1-acyl-sn-glycero-3-phosphocholine(in) + H(+)(in). It carries out the reaction 1-hexadecanoyl-sn-glycero-3-phosphocholine(out) + H(+)(out) = 1-hexadecanoyl-sn-glycero-3-phosphocholine(in) + H(+)(in). It catalyses the reaction 1-(9Z-octadecenoyl)-sn-glycero-3-phosphocholine(out) + H(+)(out) = 1-(9Z-octadecenoyl)-sn-glycero-3-phosphocholine(in) + H(+)(in). The enzyme catalyses 1-(5Z,8Z,11Z,14Z-eicosatetraenoyl)-sn-glycero-3-phosphocholine(out) + H(+)(out) = 1-(5Z,8Z,11Z,14Z-eicosatetraenoyl)-sn-glycero-3-phosphocholine(in) + H(+)(in). The catalysed reaction is 1-(4Z,7Z,10Z,13Z,16Z,19Z-docosahexaenoyl)-sn-glycero-3-phosphocholine(out) + H(+)(out) = 1-(4Z,7Z,10Z,13Z,16Z,19Z-docosahexaenoyl)-sn-glycero-3-phosphocholine(in) + H(+)(in). It carries out the reaction a 1-acyl-sn-glycero-3-phosphoethanolamine(out) + H(+)(out) = a 1-acyl-sn-glycero-3-phosphoethanolamine(in) + H(+)(in). It catalyses the reaction 1-(9Z-octadecenoyl)-sn-glycero-3-phosphoethanolamine(out) + H(+)(out) = 1-(9Z-octadecenoyl)-sn-glycero-3-phosphoethanolamine(in) + H(+)(in). The enzyme catalyses 1-acyl-sn-glycero-3-phospho-(1'-sn-glycerol)(out) + H(+)(out) = 1-acyl-sn-glycero-3-phospho-(1'-sn-glycerol)(in) + H(+)(in). The catalysed reaction is 1-(9Z-octadecenoyl)-sn-glycero-3-phospho-(1'-sn-glycerol)(out) + H(+)(out) = 1-(9Z-octadecenoyl)-sn-glycero-3-phospho-(1'-sn-glycerol)(in) + H(+)(in). It carries out the reaction a 1-O-(1Z-alkenyl)-sn-glycero-3-phosphocholine(out) + H(+)(out) = a 1-O-(1Z-alkenyl)-sn-glycero-3-phosphocholine(in) + H(+)(in). It catalyses the reaction 1-(1Z-hexadecenyl)-sn-glycero-3-phosphocholine(out) + H(+)(out) = 1-(1Z-hexadecenyl)-sn-glycero-3-phosphocholine(in) + H(+)(in). The enzyme catalyses a 1-O-(1Z-alkenyl)-sn-glycero-3-phosphoethanolamine(out) + H(+)(out) = a 1-O-(1Z-alkenyl)-sn-glycero-3-phosphoethanolamine(in) + H(+)(in). The catalysed reaction is 1-O-(1Z-hexadecenyl)-sn-glycero-3-phosphoethanolamine(out) + H(+)(out) = 1-O-(1Z-hexadecenyl)-sn-glycero-3-phosphoethanolamine(in) + H(+)(in). In terms of biological role, plays a critical role in the phospholipid salvage pathway from lysosomes to the cytosol. Mediates the rate-limiting, proton-dependent, lysosomal efflux of lysophospholipids, which can then be reacylated by acyltransferases in the endoplasmic reticulum to form phospholipids. Selective for zwitterionic headgroups such as lysophosphatidylcholine (LPC) and lysophosphatidylethanolamine (LPE), can also transport lysophosphatidylglycerol (LPG), but not other anionic lysophospholipids, sphingosine, nor sphingomyelin. Transports lysophospholipids with saturated, monounsaturated, and polyunsaturated fatty acids, such as 1-hexadecanoyl-sn-glycero-3-phosphocholine, 1-(9Z-octadecenoyl)-sn-glycero-3-phosphocholine and 1-(4Z,7Z,10Z,13Z,16Z,19Z-docosahexaenoyl)-sn-glycero-3-phosphocholine, respectively. Can also transport lysoplasmalogen (LPC with a fatty alcohol) such as 1-(1Z-hexadecenyl)-sn-glycero-3-phosphocholine. Essential player in lysosomal homeostasis. Crucial for cell survival under conditions of nutrient limitation. May be involved in necrotic or autophagic cell death. In Bos taurus (Bovine), this protein is Protein spinster homolog 1 (SPNS1).